The chain runs to 230 residues: Large ribosomal subunit protein uL1 (230 aa).

This sequence belongs to the universal ribosomal protein uL1 family. Part of the 50S ribosomal subunit.

Binds directly to 23S rRNA. The L1 stalk is quite mobile in the ribosome, and is involved in E site tRNA release. Functionally, protein L1 is also a translational repressor protein, it controls the translation of the L11 operon by binding to its mRNA. The chain is Large ribosomal subunit protein uL1 from Leptospira borgpetersenii serovar Hardjo-bovis (strain L550).